The chain runs to 399 residues: S-adenosylmethionine synthase (399 aa).

An ATP-binding site is contributed by His16. Asp18 serves as a coordination point for Mg(2+). Glu44 is a K(+) binding site. L-methionine-binding residues include Glu57 and Gln100. The interval 100 to 110 is flexible loop; it reads QSSDIAQGVNE. ATP is bound by residues 177–179, 244–245, Asp253, 259–260, Ala276, and Lys280; these read DAK, RF, and RK. Asp253 contributes to the L-methionine binding site. Lys284 lines the L-methionine pocket.

This sequence belongs to the AdoMet synthase family. In terms of assembly, homotetramer; dimer of dimers. Mg(2+) is required as a cofactor. It depends on K(+) as a cofactor.

The protein localises to the cytoplasm. The catalysed reaction is L-methionine + ATP + H2O = S-adenosyl-L-methionine + phosphate + diphosphate. It functions in the pathway amino-acid biosynthesis; S-adenosyl-L-methionine biosynthesis; S-adenosyl-L-methionine from L-methionine: step 1/1. Its function is as follows. Catalyzes the formation of S-adenosylmethionine (AdoMet) from methionine and ATP. The overall synthetic reaction is composed of two sequential steps, AdoMet formation and the subsequent tripolyphosphate hydrolysis which occurs prior to release of AdoMet from the enzyme. In Lactococcus lactis subsp. cremoris (strain MG1363), this protein is S-adenosylmethionine synthase.